The sequence spans 391 residues: Response regulator aspartate phosphatase I (391 aa).

TPR repeat units follow at residues 62-95 (LEFRHEIMLSYMKSKEIEDLNNAYETIKEIEKQG), 150-183 (SYVYYYMKQTYFSMNYANRALKIFREYEEYAVQT), 184-217 (VRCQFIVAGNLIDSLEYERALEQFLKSLEISKES), 224-257 (AMSHMNIGICYDELKEYKKASQHLILALEIFEKS), 275-311 (KQQNYNVALIYFRKGRFIADKSDDKEYSAKFKILEGL), and 338-371 (ENFSIEVADYFHEQGNLMLSNEYYRMSIEARRKI).

The protein belongs to the Rap family.

The protein localises to the cytoplasm. Inhibited by PhrI. Its function is as follows. Activates ICEBs1 gene expression, excision and transfer by inactivating the ICEBs1 repressor protein ImmR. RapI-mediated induction likely results from an increase in the specific activity of the protease ImmA, which mediates proteolysis of ImmR. In addition, is involved in regulation of sporulation. Acts as a phosphatase that specifically dephosphorylates the sporulation initiation phosphotransferase Spo0F and inhibits its activity. This is Response regulator aspartate phosphatase I (rapI) from Bacillus subtilis (strain 168).